A 445-amino-acid polypeptide reads, in one-letter code: MKSLILTTLALLPLVSCKPWVQLSHQTPISADRNLIPGAAEKSQLDKIIADSELLSLHRSLTEIESISSREGDVGDFLVDYLQKHGFTVEKQHVSSDGNEADKMKPSSFNVYAYPRSSPAPEIILTSHIDTVPPFIPYSLSLPKSSSTGSIDRRAIHISGRGTVDDKGSVACQIIAILSHLKSHPDARLGLLFVVGEETGGQGMHHFSRSPLNTSPPTFHTVIFGEPTENKLVSGHKGMLQFTVSVHGKPAHSGYPWLGRSAVSEILPILSKIDQLGDIPESEGGLPSSEKYGKTTLNIGFMEGGVATNVVPARAFARVAVRLAGGTVEQAKERITAAVRSASREYRADVRLWFFSGGGYPPIDLDTDVEGFDILAVNYGTDVPNLMIHDHDQPEDKKVKRYLYGPGSIFSAHGENEGLSVGDMEDAVEGYGRLIRAAVERGQRK.

Positions Met-1–Cys-17 are cleaved as a signal peptide. Asp-165 contacts Zn(2+). The Proton acceptor role is filled by Glu-197. A Zn(2+)-binding site is contributed by Glu-198.

It belongs to the peptidase M20A family. The cofactor is Zn(2+).

It localises to the secreted. The sequence is that of Probable carboxypeptidase UREG_07869 from Uncinocarpus reesii (strain UAMH 1704).